We begin with the raw amino-acid sequence, 1470 residues long: Transient receptor potential cation channel subfamily M member 2 (1470 aa).

Over 1-725 (MDEAALEPTL…GELSVDNPHW (725 aa)) the chain is Cytoplasmic. Residues Tyr-267, Arg-274, 305–308 (GPGT), and Arg-330 contribute to the ADP-D-ribose site. The stretch at 726-738 (KVLLCMIFFPLIY) is an intramembrane region. Residues 739 to 808 (TGFLTFRRDE…MSFLKSPQVK (70 aa)) are Cytoplasmic-facing. Residues 809–829 (FYWNIASYFGFLWLFAVVLMI) form a helical membrane-spanning segment. Residues 830-836 (DFQTSPS) lie on the Extracellular side of the membrane. A helical transmembrane segment spans residues 837–857 (WRELLLYVWLTSLVCEEIRQL). The Ca(2+) site is built by Glu-853 and Gln-856. Over 858-876 (YHDFDGSGFRRKAKMYIKD) the chain is Cytoplasmic. A helical transmembrane segment spans residues 877-897 (LWNILDVLSIVLFIAGLICRL). Position 879 (Asn-879) interacts with Ca(2+). The Extracellular segment spans residues 898 to 905 (QASDTVFY). Residues 906 to 926 (IGKVILCIDFIIFCLRLMAIF) traverse the membrane as a helical segment. The Cytoplasmic segment spans residues 927-941 (SISRTLGPKIIIVRR). A helical transmembrane segment spans residues 942–968 (MMLDLFFFMFLLSIWVVAYGVAKQGIL). Over 969-977 (IENEERLNW) the chain is Extracellular. An intramembrane region (pore-forming) is located at residues 978-1002 (IIRGAVYEPYITIFGNFPTNIDNTL). Positions 991–993 (FGN) match the Selectivity filter motif. The Extracellular portion of the chain corresponds to 1003–1034 (FDISSCSVNASDPLKPKCPMLNADNTPVFPEW). Residues Cys-1008 and Cys-1020 are joined by a disulfide bond. N-linked (GlcNAc...) asparagine glycosylation occurs at Asn-1011. The helical transmembrane segment at 1035–1059 (LTIMMLCVYLLFANILLLNLLIAIF) threads the bilayer. Topologically, residues 1060–1087 (NYTFQEVQDNTDTIWKFQRYELIKEYHS) are cytoplasmic. Glu-1084 serves as a coordination point for Ca(2+). Residues 1088–1105 (RPALPPPFILLSHLILFI) lie within the membrane without spanning it. Residues 1106-1470 (RGVFLRDLPQ…QIAHHHNTYF (365 aa)) lie on the Cytoplasmic side of the membrane. Residues 1157–1470 (HRIHDTAEKV…QIAHHHNTYF (314 aa)) form a divergent Nudix hydrolase-like domain region. Disordered regions lie at residues 1215–1256 (KSKV…LQYP) and 1281–1314 (PPVY…GKGA). Residues 1231–1244 (DDGDSSGQETDDEE) show a composition bias toward acidic residues. The span at 1283 to 1295 (VYNQQDSSESDTS) shows a compositional bias: polar residues. ADP-D-ribose-binding residues include Asp-1398 and Arg-1400.

It belongs to the transient receptor (TC 1.A.4) family. LTrpC subfamily. TRPM2 sub-subfamily. In terms of assembly, homotetramer.

The protein localises to the cell membrane. It carries out the reaction Ca(2+)(in) = Ca(2+)(out). The catalysed reaction is Na(+)(in) = Na(+)(out). Its activity is regulated as follows. Activated by intracellular ADP-ribose. Ca(2+) and PI(4,5)P2 are required for channel opening by ADP-ribose. Its function is as follows. Nonselective, voltage-independent cation channel that mediates Ca(2+) influx, leading to increased cytoplasmic Ca(2+) levels. Functions as a ligand-gated ion channel, gated by intracellular adenosine diphosphate ribose (ADP-ribose), Ca(2+), warm temperature, and oxidative stress. Binding of ADP-ribose to the cytoplasmic N-terminal region causes a conformation change; the channel is primed but still requires Ca(2+) binding to trigger channel opening. This is Transient receptor potential cation channel subfamily M member 2 from Danio rerio (Zebrafish).